The following is a 540-amino-acid chain: Esterase B1 (540 aa).

A disulfide bridge links C68 with C81. S191 functions as the Acyl-ester intermediate in the catalytic mechanism. Catalysis depends on charge relay system residues E324 and H442. A glycan (N-linked (GlcNAc...) asparagine) is linked at N452.

It belongs to the type-B carboxylesterase/lipase family.

It carries out the reaction a carboxylic ester + H2O = an alcohol + a carboxylate + H(+). In terms of biological role, overproduction of nonspecific esterases is a common mechanism of resistance to organophosphate insecticides. In Culex pipiens (House mosquito), this protein is Esterase B1 (B1).